Here is a 614-residue protein sequence, read N- to C-terminus: Maltose permease MAL31 (614 aa).

Positions 1 to 48 are disordered; sequence MKGLSSLINRKKDRNDSHLDEIENGVNATEFNSIEMEEQGKKSDFDLS. The Cytoplasmic portion of the chain corresponds to 1–108; sequence MKGLSSLINR…AAAWSLLVST (108 aa). Residues 38–48 are compositionally biased toward basic and acidic residues; that stretch reads EQGKKSDFDLS. Residues 109–129 form a helical membrane-spanning segment; it reads TLIQEGYDTAILGAFYALPVF. Residues 130–144 are Extracellular-facing; the sequence is QKKYGSLNSNTGDYE. A helical transmembrane segment spans residues 145 to 165; the sequence is ISVSWQIGLCLCYMAGEIVGL. At 166-180 the chain is on the cytoplasmic side; that stretch reads QMTGPSVDYMGNRYT. Residues 181 to 201 form a helical membrane-spanning segment; that stretch reads LIMALFFLAAFIFILYFCKSL. Position 202 (glycine 202) is a topological domain, extracellular. Residues 203–223 traverse the membrane as a helical segment; the sequence is MIAVGQALCGMPWGCFQCLTV. The Cytoplasmic portion of the chain corresponds to 224-236; that stretch reads SYASEICPLALRY. The helical transmembrane segment at 237 to 257 threads the bilayer; that stretch reads YLTTYSNLCWAFGQLFAAGIM. The Extracellular portion of the chain corresponds to 258-272; the sequence is KNSQNKYANSELGYK. Residues 273-293 traverse the membrane as a helical segment; that stretch reads LPFALQWIWPLPLAVGIFFAP. Residues 294–364 lie on the Cytoplasmic side of the membrane; sequence ESPWWLVKKG…KDGINRRRTR (71 aa). The chain crosses the membrane as a helical span at residues 365 to 385; the sequence is IACLCWIGQCSCGASLIGYST. At 386-398 the chain is on the extracellular side; the sequence is YFYEKAGVSTDTA. A helical membrane pass occupies residues 399 to 419; that stretch reads FTFSIIQYCLGIAATFISWWA. The Cytoplasmic portion of the chain corresponds to 420 to 427; sequence SKYCGRFD. A helical membrane pass occupies residues 428 to 448; sequence LYAFGLAFQAIMFFIIGGLGC. Topologically, residues 449-460 are extracellular; it reads SDTHGAKMGSGA. A helical transmembrane segment spans residues 461–481; it reads LLMVVAFFYNLGIAPVVFCLV. At 482 to 493 the chain is on the cytoplasmic side; that stretch reads SEIPSSRLRTKT. Residues 494-514 form a helical membrane-spanning segment; sequence IILARNAYNVIQVVVTVLIMY. Residues 515–526 are Extracellular-facing; sequence QLNSEKWNWGAK. The chain crosses the membrane as a helical span at residues 527 to 547; it reads SGFFWGGFCLATLAWAVVDLP. The Cytoplasmic portion of the chain corresponds to 548–614; that stretch reads ETAGRTFIEI…GRNTSSVVNK (67 aa). Residues 595 to 614 form a disordered region; it reads EDLETSVVDEGRNTSSVVNK.

This sequence belongs to the major facilitator superfamily. Sugar transporter (TC 2.A.1.1) family.

It localises to the membrane. In terms of biological role, high-affinity uptake of maltose and maltotriose. Also transports turanose but not alpha-methylglucoside, melezitose or trehalose. The chain is Maltose permease MAL31 (MAL31) from Saccharomyces cerevisiae (strain ATCC 204508 / S288c) (Baker's yeast).